Reading from the N-terminus, the 232-residue chain is Flagellar L-ring protein (232 aa).

A signal peptide spans 1–21; it reads MQKNAAHTYAISSLLVLSLTG. The N-palmitoyl cysteine moiety is linked to residue Cys22. The S-diacylglycerol cysteine moiety is linked to residue Cys22.

This sequence belongs to the FlgH family. As to quaternary structure, the basal body constitutes a major portion of the flagellar organelle and consists of four rings (L,P,S, and M) mounted on a central rod.

It is found in the cell outer membrane. The protein resides in the bacterial flagellum basal body. Its function is as follows. Assembles around the rod to form the L-ring and probably protects the motor/basal body from shearing forces during rotation. In Escherichia coli O6:H1 (strain CFT073 / ATCC 700928 / UPEC), this protein is Flagellar L-ring protein.